The primary structure comprises 706 residues: Glycine--tRNA ligase beta subunit (706 aa).

The protein belongs to the class-II aminoacyl-tRNA synthetase family. As to quaternary structure, tetramer of two alpha and two beta subunits.

The protein localises to the cytoplasm. It catalyses the reaction tRNA(Gly) + glycine + ATP = glycyl-tRNA(Gly) + AMP + diphosphate. This is Glycine--tRNA ligase beta subunit from Acidobacterium capsulatum (strain ATCC 51196 / DSM 11244 / BCRC 80197 / JCM 7670 / NBRC 15755 / NCIMB 13165 / 161).